The sequence spans 515 residues: U3 small nucleolar RNA-associated protein 15 homolog (515 aa).

WD repeat units follow at residues 36–75 (KEFG…PVKT), 78–117 (RFKD…ALRQ), 120–159 (GHSK…EIAS), 162–202 (EHTD…SVMS), 204–242 (DHGQ…QLLV), 246–285 (NHHK…VVHS), and 287–326 (DYAA…RKPL).

As to quaternary structure, part of the small subunit (SSU) processome, composed of more than 70 proteins and the RNA chaperone small nucleolar RNA (snoRNA) U3. May be a component of the proposed t-UTP subcomplex of the ribosomal small subunit (SSU) processome.

Its subcellular location is the nucleus. It localises to the nucleolus. Its function is as follows. Ribosome biogenesis factor. Involved in nucleolar processing of pre-18S ribosomal RNA. Required for optimal pre-ribosomal RNA transcription by RNA polymerase I. Part of the small subunit (SSU) processome, first precursor of the small eukaryotic ribosomal subunit. During the assembly of the SSU processome in the nucleolus, many ribosome biogenesis factors, an RNA chaperone and ribosomal proteins associate with the nascent pre-rRNA and work in concert to generate RNA folding, modifications, rearrangements and cleavage as well as targeted degradation of pre-ribosomal RNA by the RNA exosome. The protein is U3 small nucleolar RNA-associated protein 15 homolog (utp15) of Xenopus laevis (African clawed frog).